We begin with the raw amino-acid sequence, 526 residues long: ATP synthase subunit alpha (526 aa).

171 to 178 (GDRQTGKT) provides a ligand contact to ATP.

This sequence belongs to the ATPase alpha/beta chains family. F-type ATPases have 2 components, CF(1) - the catalytic core - and CF(0) - the membrane proton channel. CF(1) has five subunits: alpha(3), beta(3), gamma(1), delta(1), epsilon(1). CF(0) has four main subunits: a(1), b(1), b'(1) and c(9-12).

Its subcellular location is the cell inner membrane. It carries out the reaction ATP + H2O + 4 H(+)(in) = ADP + phosphate + 5 H(+)(out). Functionally, produces ATP from ADP in the presence of a proton gradient across the membrane. The alpha chain is a regulatory subunit. This is ATP synthase subunit alpha from Chlorobium phaeovibrioides (strain DSM 265 / 1930) (Prosthecochloris vibrioformis (strain DSM 265)).